Reading from the N-terminus, the 81-residue chain is Gamma-conotoxin-like TxMEKL-0511 (81 aa).

The signal sequence occupies residues 1–19 (MEKLTILLLVAAVLLSIQA). A propeptide spanning residues 20 to 45 (LNQEKHQRAKINLLSKRKPPAERWWR) is cleaved from the precursor. 3 disulfides stabilise this stretch: cysteine 49–cysteine 63, cysteine 56–cysteine 67, and cysteine 62–cysteine 72.

This sequence belongs to the conotoxin O2 superfamily. As to expression, expressed by the venom duct.

It is found in the secreted. Functionally, gamma-conotoxins may act on voltage-gated non-specific cation pacemaker channels (HCN). This is Gamma-conotoxin-like TxMEKL-0511 from Conus textile (Cloth-of-gold cone).